The sequence spans 324 residues: Cytosolic sulfotransferase 13 (324 aa).

Residue 76–81 coordinates 3'-phosphoadenylyl sulfate; that stretch reads KSGTTW. His-134 (proton acceptor) is an active-site residue. Residues Arg-156, Ser-164, Tyr-222, and 288-290 each bind 3'-phosphoadenylyl sulfate; that span reads RKG.

Belongs to the sulfotransferase 1 family.

It is found in the cytoplasm. Functionally, sulfotransferase that utilizes 3'-phospho-5'-adenylyl sulfate (PAPS) as sulfonate donor. The sequence is that of Cytosolic sulfotransferase 13 (SOT13) from Arabidopsis thaliana (Mouse-ear cress).